Reading from the N-terminus, the 35-residue chain is Mu-theraphotoxin-Ca2a (35 aa).

Cystine bridges form between Cys2-Cys17, Cys9-Cys24, and Cys16-Cys31.

Belongs to the neurotoxin 10 (Hwtx-1) family. 10 (haplotoxin-1) subfamily. Expressed by the venom gland.

It localises to the secreted. Functionally, potently inhibits Nav1.7/SCN9A (IC(50)=98.1 nM), and moderately inhibits Nav1.2/SCN2A (IC(50)=216.3 nM), Nav1.6/SCN8A (IC(50)=313.6 nM), and Nav1.3/SCN3A (IC(50)=491.3 nM). Hyperpolarizes the slow inactivation, but does not alter the voltage-dependent activation or fast inactivation of Nav1.7/SCN9A. Binds with Nav1.7/SCN9A at the extracellular S3-S4 linker of domain II (site 4). In vivo, exhibits dose-dependent analgesic efficacy by reducing pain responses in rodent models of formalin-induced paw licking, hot plate test, and acetic acid-induced writhing. The protein is Mu-theraphotoxin-Ca2a of Cyriopagopus albostriatus (Cambodian tiger tarantula).